Reading from the N-terminus, the 208-residue chain is Small ribosomal subunit protein uS4 (208 aa).

In terms of domain architecture, S4 RNA-binding spans 98-161 (RRLDNVVYRL…RKIPVLAEAQ (64 aa)).

The protein belongs to the universal ribosomal protein uS4 family. Part of the 30S ribosomal subunit. Contacts protein S5. The interaction surface between S4 and S5 is involved in control of translational fidelity.

In terms of biological role, one of the primary rRNA binding proteins, it binds directly to 16S rRNA where it nucleates assembly of the body of the 30S subunit. Functionally, with S5 and S12 plays an important role in translational accuracy. This chain is Small ribosomal subunit protein uS4, found in Desulfovibrio desulfuricans (strain ATCC 27774 / DSM 6949 / MB).